The chain runs to 253 residues: Ubiquinone/menaquinone biosynthesis C-methyltransferase UbiE (253 aa).

S-adenosyl-L-methionine contacts are provided by residues Thr76, Asp97, 125 to 126 (NA), and Ser142.

This sequence belongs to the class I-like SAM-binding methyltransferase superfamily. MenG/UbiE family.

The catalysed reaction is a 2-demethylmenaquinol + S-adenosyl-L-methionine = a menaquinol + S-adenosyl-L-homocysteine + H(+). The enzyme catalyses a 2-methoxy-6-(all-trans-polyprenyl)benzene-1,4-diol + S-adenosyl-L-methionine = a 5-methoxy-2-methyl-3-(all-trans-polyprenyl)benzene-1,4-diol + S-adenosyl-L-homocysteine + H(+). The protein operates within quinol/quinone metabolism; menaquinone biosynthesis; menaquinol from 1,4-dihydroxy-2-naphthoate: step 2/2. It functions in the pathway cofactor biosynthesis; ubiquinone biosynthesis. Its function is as follows. Methyltransferase required for the conversion of demethylmenaquinol (DMKH2) to menaquinol (MKH2) and the conversion of 2-polyprenyl-6-methoxy-1,4-benzoquinol (DDMQH2) to 2-polyprenyl-3-methyl-6-methoxy-1,4-benzoquinol (DMQH2). The chain is Ubiquinone/menaquinone biosynthesis C-methyltransferase UbiE from Xylella fastidiosa (strain M12).